Consider the following 712-residue polypeptide: Glycine--tRNA ligase beta subunit (712 aa).

The protein belongs to the class-II aminoacyl-tRNA synthetase family. Tetramer of two alpha and two beta subunits.

The protein resides in the cytoplasm. The catalysed reaction is tRNA(Gly) + glycine + ATP = glycyl-tRNA(Gly) + AMP + diphosphate. The polypeptide is Glycine--tRNA ligase beta subunit (Dechloromonas aromatica (strain RCB)).